Here is a 545-residue protein sequence, read N- to C-terminus: Glucose-6-phosphate isomerase (545 aa).

The active-site Proton donor is the glutamate 351. Residues histidine 382 and lysine 510 contribute to the active site.

This sequence belongs to the GPI family.

It is found in the cytoplasm. It carries out the reaction alpha-D-glucose 6-phosphate = beta-D-fructose 6-phosphate. Its pathway is carbohydrate biosynthesis; gluconeogenesis. It participates in carbohydrate degradation; glycolysis; D-glyceraldehyde 3-phosphate and glycerone phosphate from D-glucose: step 2/4. Catalyzes the reversible isomerization of glucose-6-phosphate to fructose-6-phosphate. This Helicobacter pylori (strain HPAG1) protein is Glucose-6-phosphate isomerase.